The primary structure comprises 616 residues: Methionine--tRNA ligase, chloroplastic/mitochondrial (616 aa).

The 'HIGH' region signature appears at tyrosine 78 to serine 88. The short motif at lysine 366–serine 370 is the 'KMSKS' region element. Lysine 369 serves as a coordination point for ATP. Residues leucine 582–proline 593 are compositionally biased toward basic and acidic residues. Residues leucine 582–alanine 602 form a disordered region.

Belongs to the class-I aminoacyl-tRNA synthetase family.

Its subcellular location is the plastid. The protein resides in the chloroplast. It is found in the mitochondrion. It carries out the reaction tRNA(Met) + L-methionine + ATP = L-methionyl-tRNA(Met) + AMP + diphosphate. This is Methionine--tRNA ligase, chloroplastic/mitochondrial from Arabidopsis thaliana (Mouse-ear cress).